A 382-amino-acid chain; its full sequence is Chaperone protein DnaJ (382 aa).

The 66-residue stretch at 5 to 70 (DYYETLGVSR…NKRAAYDRYG (66 aa)) folds into the J domain. The CR-type zinc-finger motif lies at 140-218 (GKTAQIRVPT…CHGQGRITEE (79 aa)). The Zn(2+) site is built by Cys-153, Cys-156, Cys-170, Cys-173, Cys-192, Cys-195, Cys-206, and Cys-209. CXXCXGXG motif repeat units lie at residues 153-160 (CDVCSGSG), 170-177 (CGTCQGSG), 192-199 (CPTCHGRG), and 206-213 (CGKCHGQG).

This sequence belongs to the DnaJ family. As to quaternary structure, homodimer. Zn(2+) is required as a cofactor.

The protein resides in the cytoplasm. In terms of biological role, participates actively in the response to hyperosmotic and heat shock by preventing the aggregation of stress-denatured proteins and by disaggregating proteins, also in an autonomous, DnaK-independent fashion. Unfolded proteins bind initially to DnaJ; upon interaction with the DnaJ-bound protein, DnaK hydrolyzes its bound ATP, resulting in the formation of a stable complex. GrpE releases ADP from DnaK; ATP binding to DnaK triggers the release of the substrate protein, thus completing the reaction cycle. Several rounds of ATP-dependent interactions between DnaJ, DnaK and GrpE are required for fully efficient folding. Also involved, together with DnaK and GrpE, in the DNA replication of plasmids through activation of initiation proteins. The chain is Chaperone protein DnaJ from Rhizobium rhizogenes (strain K84 / ATCC BAA-868) (Agrobacterium radiobacter).